Consider the following 335-residue polypeptide: Nucleoid-associated protein YejK (335 aa).

The protein belongs to the YejK family.

It localises to the cytoplasm. The protein resides in the nucleoid. This Shigella boydii serotype 18 (strain CDC 3083-94 / BS512) protein is Nucleoid-associated protein YejK.